Reading from the N-terminus, the 1111-residue chain is Receptor-type guanylate cyclase gcy-14 (1111 aa).

An N-terminal signal peptide occupies residues 1–14; sequence MCLFLLLFPYLASG. At 15 to 473 the chain is on the extracellular side; it reads QFLQTVKVGL…ECPPDFVKEY (459 aa). N-linked (GlcNAc...) asparagine glycans are attached at residues N65, N130, N318, N340, N365, and N379. Residues 474–494 form a helical membrane-spanning segment; the sequence is LVYTIIAAVIVVLALLAGCAG. The Protein kinase domain maps to 482–817; the sequence is VIVVLALLAG…KSNLMDHVFN (336 aa). Residues 488–496 and K545 contribute to the ATP site; that span reads LLAGCAGLL. Over 495–1111 the chain is Cytoplasmic; that stretch reads LLYTMQMKRK…DFNNGNECVS (617 aa). The Guanylate cyclase domain occupies 875 to 1005; sequence TIFFSDVVQF…DAVNTASRME (131 aa). A disordered region spans residues 1061 to 1082; sequence SAQAPREKTPEPPRRQSVRSIS. Over residues 1065 to 1074 the composition is skewed to basic and acidic residues; the sequence is PREKTPEPPR.

This sequence belongs to the adenylyl cyclase class-4/guanylyl cyclase family. As to quaternary structure, homodimer. As to expression, expressed asymmetrically in ASEL sensory neuron.

It localises to the cell membrane. It is found in the cell projection. The protein localises to the cilium. It carries out the reaction GTP = 3',5'-cyclic GMP + diphosphate. Guanylate cyclase involved in the production of the second messenger cGMP. Regulates chemotaxis responses toward Na(1+) and Li(1+) salt ions and alkaline pH in ASE left (ASEL) sensory neuron. Directly senses environmental alkalinity in ASEL neuron which probably leads to the activation of cGMP-gated cation channel tax2/tax4. The protein is Receptor-type guanylate cyclase gcy-14 of Caenorhabditis elegans.